We begin with the raw amino-acid sequence, 361 residues long: Mitochondrial import receptor subunit TOM40 homolog (361 aa).

A compositionally biased stretch (low complexity) spans 1 to 10 (MGNVLAASSP). Positions 1–71 (MGNVLAASSP…TASASGAAED (71 aa)) are disordered. Residues 11 to 36 (PAGPPPPPAPALVGLPPPPPSPPGFT) show a composition bias toward pro residues. Composition is skewed to low complexity over residues 37–52 (LPPL…STSR) and 59–71 (GAAT…AAED).

Belongs to the Tom40 family. As to quaternary structure, forms part of the preprotein translocase complex of the outer mitochondrial membrane (TOM complex) which consists of at least 7 different proteins (TOMM5, TOMM6, TOMM7, TOMM20, TOMM22, TOMM40 and TOMM70). Interacts with mitochondrial targeting sequences. Interacts with TIMM29; linking the TIM22 complex to the TOM complex. Forms a complex with BCAP31 (via C-terminus) which mediates the translocation of components of the mitochondrial membrane respiratory chain NADH dehydrogenase (Complex I) from the cytosol to the mitochondria. Interacts (via N-terminus) with CYP1A1 (via mitochondrial targeting signal); this interaction is required for CYP1A1 translocation across the mitochondrial outer membrane.

It localises to the mitochondrion outer membrane. Its function is as follows. Channel-forming protein essential for import of protein precursors into mitochondria. Plays a role in the assembly of the mitochondrial membrane respiratory chain NADH dehydrogenase (Complex I) by forming a complex with BCAP31 and mediating the translocation of Complex I components from the cytosol to the mitochondria. The protein is Mitochondrial import receptor subunit TOM40 homolog (TOMM40) of Homo sapiens (Human).